Reading from the N-terminus, the 945-residue chain is Valine--tRNA ligase (945 aa).

A 'HIGH' region motif is present at residues 42–52 (PNVTGTLHMGH). The short motif at 552-556 (KMSKS) is the 'KMSKS' region element. An ATP-binding site is contributed by K555. The stretch at 879 to 945 (DKAAETARLS…VQNQLAKLKD (67 aa)) forms a coiled coil.

This sequence belongs to the class-I aminoacyl-tRNA synthetase family. ValS type 1 subfamily. In terms of assembly, monomer.

It is found in the cytoplasm. It catalyses the reaction tRNA(Val) + L-valine + ATP = L-valyl-tRNA(Val) + AMP + diphosphate. In terms of biological role, catalyzes the attachment of valine to tRNA(Val). As ValRS can inadvertently accommodate and process structurally similar amino acids such as threonine, to avoid such errors, it has a 'posttransfer' editing activity that hydrolyzes mischarged Thr-tRNA(Val) in a tRNA-dependent manner. This is Valine--tRNA ligase from Neisseria gonorrhoeae (strain ATCC 700825 / FA 1090).